Here is a 291-residue protein sequence, read N- to C-terminus: tRNA dimethylallyltransferase (291 aa).

5–12 (GPTAGGKS) lines the ATP pocket. 7–12 (TAGGKS) contributes to the substrate binding site. An interaction with substrate tRNA region spans residues 30–33 (DSMQ).

Belongs to the IPP transferase family. Monomer. Mg(2+) is required as a cofactor.

The catalysed reaction is adenosine(37) in tRNA + dimethylallyl diphosphate = N(6)-dimethylallyladenosine(37) in tRNA + diphosphate. Catalyzes the transfer of a dimethylallyl group onto the adenine at position 37 in tRNAs that read codons beginning with uridine, leading to the formation of N6-(dimethylallyl)adenosine (i(6)A). The sequence is that of tRNA dimethylallyltransferase from Frankia casuarinae (strain DSM 45818 / CECT 9043 / HFP020203 / CcI3).